Reading from the N-terminus, the 375-residue chain is MFNPHVLDVPAVIFDNGSGLCKAGVSGEIGPRHVINSVLGHRKFNMPSARLNQYFVGQEALYKFDALHLHYPIKRGLVTGWDDMEKLWKHLFEWELGVKPSQQPVLMTEPSLNPREIREKLAEMMFENFSVPGFYLSNHAVAALYASACVTGLVVDSGDGVTCAVPIFEGYSLPHAVTKLYTAGRDITEHLTQLLFANGFNFPCILNKAVANNIKEKLCYIALEPEKELRKSRGEVLGAYRLPDGHVIHFGDELYQVPEVLFAPDQLGIHSPGLSKMVSSSIMKCDTDIQNKLYAEIVLSGGTTLFPGLEERLMKEVEQLASKGTPIKITASPDRCFSAWIGASIMTSMSSFKQMWVTSADFKEYGTSVVQRRCF.

This sequence belongs to the actin family.

The protein localises to the cytoplasm. It is found in the cytoskeleton. It localises to the nucleus. The protein resides in the cytoplasmic vesicle. Its subcellular location is the secretory vesicle. The protein localises to the acrosome. Negatively regulates the Hedgehog (SHH) signaling. Binds to the promoter of the SHH signaling mediator, GLI1, and inhibits its expression. The polypeptide is Actin-related protein T1 (ACTRT1) (Macaca fascicularis (Crab-eating macaque)).